Consider the following 425-residue polypeptide: MLDFDLVLFGATGDLAMRKLFVSLYEIYTHYGFKNDSRIIASGRKELSNEEFLTLLCEKTQLHSREKGREFLAHISYLCVRLDNPKDFEELSKIATKNKPLIFYFSISPSFFATTAQHLAKNALNHANTRLILEKPLGHDLKTCKEIFQSISVFFKEEQIFRIDHYLGKKGVQNILELRLNNPILNILWDQISAVEICVYETLGVEERGEFYDKIGALRDMVQNHLLQVLSLIATDLPNNLKDLRKEKIKVLKTLQPPKDFKKQVIRAQYQGYRDENKVHKESQTETFVAIKAFLDTPKFKGVPFYLKHAKKMPHNQASVKIHFNAVNTLEFFLSQDKITLTLKDHQNPLILETHNKQEFLRPYAKLLYDAIQNNHNNFAHQLELEASWVFIDTLIEGFMNNATPLYSYESHHLNESEFLKPLYQ.

Positions 44 and 135 each coordinate NADP(+). 4 residues coordinate substrate: His-165, Lys-169, Glu-201, and Asp-220. The Proton acceptor role is filled by His-225. Lys-311 is a substrate binding site.

The protein belongs to the glucose-6-phosphate dehydrogenase family.

It carries out the reaction D-glucose 6-phosphate + NADP(+) = 6-phospho-D-glucono-1,5-lactone + NADPH + H(+). It functions in the pathway carbohydrate degradation; pentose phosphate pathway; D-ribulose 5-phosphate from D-glucose 6-phosphate (oxidative stage): step 1/3. Functionally, catalyzes the oxidation of glucose 6-phosphate to 6-phosphogluconolactone. This is Glucose-6-phosphate 1-dehydrogenase from Helicobacter pylori (strain ATCC 700392 / 26695) (Campylobacter pylori).